The primary structure comprises 89 residues: Large ribosomal subunit protein bL27 (89 aa).

The disordered stretch occupies residues 1–22 (MAHKKAGGSSRNGRDSAGRRLG).

Belongs to the bacterial ribosomal protein bL27 family.

The sequence is that of Large ribosomal subunit protein bL27 from Dinoroseobacter shibae (strain DSM 16493 / NCIMB 14021 / DFL 12).